We begin with the raw amino-acid sequence, 123 residues long: Prostate stem cell antigen (123 aa).

Positions 1–20 (MKTVFFLLLATYLALHPGAA) are cleaved as a signal peptide. The UPAR/Ly6 domain maps to 21–95 (LQCYSCTAQM…CCYSDLCNVN (75 aa)). Cystine bridges form between Cys-23–Cys-48, Cys-26–Cys-35, Cys-41–Cys-66, Cys-70–Cys-86, and Cys-87–Cys-92. Asn-40 carries N-linked (GlcNAc...) asparagine glycosylation. Asn-95 carries the GPI-anchor amidated asparagine lipid modification. Residues 96–123 (GAHTLKPPTTLGLLTVLCSLLLWGSSRL) constitute a propeptide, removed in mature form.

As to quaternary structure, interacts with CHRNA4. As to expression, predominantly expressed in prostate. Also found in spleen, liver, lung, prostate, kidney and testis. Expressed in brain cortex; expression is increased in transgenic mouse model of Alzheimer disease (at protein level).

Its subcellular location is the cell membrane. May be involved in the regulation of cell proliferation. Functionally, may act as a modulator of nicotinic acetylcholine receptors (nAChRs) activity. In vitro inhibits nicotine-induced signaling probably implicating alpha-3:beta-2- or alpha-7-containing nAChRs. This is Prostate stem cell antigen (Psca) from Mus musculus (Mouse).